We begin with the raw amino-acid sequence, 209 residues long: Uracil phosphoribosyltransferase (209 aa).

5-phospho-alpha-D-ribose 1-diphosphate-binding positions include Arg-79, Arg-104, and 131–139; that span reads DPMLATGGS. Residues Ile-194 and 199-201 each bind uracil; that span reads GDA. Asp-200 contributes to the 5-phospho-alpha-D-ribose 1-diphosphate binding site.

It belongs to the UPRTase family. Mg(2+) is required as a cofactor.

It carries out the reaction UMP + diphosphate = 5-phospho-alpha-D-ribose 1-diphosphate + uracil. Its pathway is pyrimidine metabolism; UMP biosynthesis via salvage pathway; UMP from uracil: step 1/1. Allosterically activated by GTP. In terms of biological role, catalyzes the conversion of uracil and 5-phospho-alpha-D-ribose 1-diphosphate (PRPP) to UMP and diphosphate. The chain is Uracil phosphoribosyltransferase from Streptococcus mutans serotype c (strain ATCC 700610 / UA159).